The primary structure comprises 293 residues: Formamidopyrimidine-DNA glycosylase (293 aa).

Catalysis depends on Pro2, which acts as the Schiff-base intermediate with DNA. Glu3 serves as the catalytic Proton donor. The active-site Proton donor; for beta-elimination activity is Lys58. 3 residues coordinate DNA: His104, Arg123, and Lys166. The FPG-type zinc-finger motif lies at 257–293; the sequence is AVYDREGERCRTPGCNGTVKRLVQNGRSTFWCSGCQT. Arg283 acts as the Proton donor; for delta-elimination activity in catalysis.

The protein belongs to the FPG family. As to quaternary structure, monomer. Zn(2+) serves as cofactor.

The catalysed reaction is Hydrolysis of DNA containing ring-opened 7-methylguanine residues, releasing 2,6-diamino-4-hydroxy-5-(N-methyl)formamidopyrimidine.. The enzyme catalyses 2'-deoxyribonucleotide-(2'-deoxyribose 5'-phosphate)-2'-deoxyribonucleotide-DNA = a 3'-end 2'-deoxyribonucleotide-(2,3-dehydro-2,3-deoxyribose 5'-phosphate)-DNA + a 5'-end 5'-phospho-2'-deoxyribonucleoside-DNA + H(+). Involved in base excision repair of DNA damaged by oxidation or by mutagenic agents. Acts as a DNA glycosylase that recognizes and removes damaged bases. Has a preference for oxidized purines, such as 7,8-dihydro-8-oxoguanine (8-oxoG). Has AP (apurinic/apyrimidinic) lyase activity and introduces nicks in the DNA strand. Cleaves the DNA backbone by beta-delta elimination to generate a single-strand break at the site of the removed base with both 3'- and 5'-phosphates. This is Formamidopyrimidine-DNA glycosylase from Rhodopseudomonas palustris (strain HaA2).